The primary structure comprises 657 residues: ABC1 family protein YPL109C, mitochondrial (657 aa).

The transit peptide at 1–15 (MSFLKFAYRNSWRYY) directs the protein to the mitochondrion.

The protein belongs to the protein kinase superfamily. ADCK protein kinase family.

It is found in the mitochondrion. In Saccharomyces cerevisiae (strain ATCC 204508 / S288c) (Baker's yeast), this protein is ABC1 family protein YPL109C, mitochondrial.